The sequence spans 2013 residues: Centrosomal protein 224 (2013 aa).

HEAT repeat units lie at residues Thr115 to Thr153, Gln158 to Lys196, Pro200 to Lys238, Thr348 to Ser386, and Thr427 to Glu465. The disordered stretch occupies residues Pro512–Asn557. The segment covering Thr524–Ser543 has biased composition (low complexity). 5 HEAT repeats span residues Ile724 to Ala762, Val816 to Arg854, Gln857 to Gly895, Glu899 to Gly937, and Pro977 to Leu1015. Residues Lys1043–Gln1109 are disordered. Over residues Lys1053 to Ser1106 the composition is skewed to low complexity. HEAT repeat units lie at residues Glu1240–Pro1279, Val1281–Ala1314, and Cys1317–Asp1353. Low complexity-rich tracts occupy residues Asn1372–Gln1406, Asn1695–Ser1735, and Ser1746–Thr1796. Disordered regions lie at residues Asn1372–Thr1413, Asn1695–Lys1809, Asn1905–Gln1949, and Thr1966–Ser1995. Positions Ile1799–Lys1809 are enriched in basic and acidic residues. Low complexity predominate over residues Asn1913–Asn1939. Residues Ser1940–Gln1949 are compositionally biased toward polar residues. Positions Leu1967–Ser1995 are enriched in low complexity.

The protein belongs to the TOG/XMAP215 family. Interacts with eb1 at the microtubule tip, centrosome and kinetochore. Interacts with lis1 in the cortical attachment of microtubules.

The protein resides in the cytoplasm. Its subcellular location is the cytoskeleton. It is found in the microtubule organizing center. The protein localises to the centrosome. It localises to the chromosome. The protein resides in the centromere. Its subcellular location is the kinetochore. Involved in regulation of microtubule dynamics. Regulates the interaction of microtubules tips with the centrosome and cell cortex. The polypeptide is Centrosomal protein 224 (mtaA) (Dictyostelium discoideum (Social amoeba)).